The chain runs to 243 residues: Probable transcriptional regulatory protein TTE1135 (243 aa).

Belongs to the TACO1 family.

Its subcellular location is the cytoplasm. This is Probable transcriptional regulatory protein TTE1135 from Caldanaerobacter subterraneus subsp. tengcongensis (strain DSM 15242 / JCM 11007 / NBRC 100824 / MB4) (Thermoanaerobacter tengcongensis).